Consider the following 264-residue polypeptide: 3-methyl-2-oxobutanoate hydroxymethyltransferase (264 aa).

Positions 44 and 83 each coordinate Mg(2+). 3-methyl-2-oxobutanoate-binding positions include aspartate 44 to serine 45, aspartate 83, and lysine 111. Residue glutamate 113 coordinates Mg(2+). Glutamate 180 serves as the catalytic Proton acceptor.

This sequence belongs to the PanB family. Homodecamer; pentamer of dimers. Mg(2+) serves as cofactor.

The protein localises to the cytoplasm. The catalysed reaction is 3-methyl-2-oxobutanoate + (6R)-5,10-methylene-5,6,7,8-tetrahydrofolate + H2O = 2-dehydropantoate + (6S)-5,6,7,8-tetrahydrofolate. Its pathway is cofactor biosynthesis; (R)-pantothenate biosynthesis; (R)-pantoate from 3-methyl-2-oxobutanoate: step 1/2. Functionally, catalyzes the reversible reaction in which hydroxymethyl group from 5,10-methylenetetrahydrofolate is transferred onto alpha-ketoisovalerate to form ketopantoate. This is 3-methyl-2-oxobutanoate hydroxymethyltransferase from Marinobacter nauticus (strain ATCC 700491 / DSM 11845 / VT8) (Marinobacter aquaeolei).